The primary structure comprises 197 residues: Recombination protein RecR (197 aa).

The segment at 56–71 adopts a C4-type zinc-finger fold; the sequence is CKRCGSYAETEICNIC. A Toprim domain is found at 79-174; sequence HTFCVVEQPE…DVTRIAYGIT (96 aa).

This sequence belongs to the RecR family.

Its function is as follows. May play a role in DNA repair. It seems to be involved in an RecBC-independent recombinational process of DNA repair. It may act with RecF and RecO. The protein is Recombination protein RecR of Leptospira borgpetersenii serovar Hardjo-bovis (strain JB197).